Here is a 420-residue protein sequence, read N- to C-terminus: Ammonia monooxygenase beta subunit (420 aa).

The N-terminal stretch at 1 to 25 is a signal peptide; it reads MGIKNLYKRGVMGLYGVAYAVAALA. Positions 38, 142, and 144 each coordinate Cu cation. The next 2 membrane-spanning stretches (helical) occupy residues 193 to 213 and 240 to 260; these read GIFW…VFTA and ITWV…RYTE.

In terms of assembly, the soluble ammonia monooxygenase is a nonamer composed of three alpha subunits (AmoA), three beta subunits (AmoB) and three gamma subunits (Cytochrome c1 PetC). The cofactor is Cu(2+).

The protein resides in the cell membrane. It localises to the cytoplasm. The enzyme catalyses AH2 + NH4(+) + O2 = hydroxylamine + A + H2O + H(+). Its activity is regulated as follows. In vitro, inhibited by acetylene. Its function is as follows. Part of the ammonia monooxygenase complex, which catalyzes the oxidation of ammonia to hydroxylamine, the first reaction in the process of ammonia oxidation to nitrite. This Nitrosomonas europaea (strain ATCC 19718 / CIP 103999 / KCTC 2705 / NBRC 14298) protein is Ammonia monooxygenase beta subunit.